Consider the following 367-residue polypeptide: NADH-quinone oxidoreductase subunit H (367 aa).

Transmembrane regions (helical) follow at residues 19 to 39 (ALFI…AYLV), 87 to 107 (ICFL…WAVI), 132 to 152 (IGVL…IIAG), 178 to 198 (IGLT…GEIV), 204 to 224 (MPYW…ISAL), 266 to 286 (ILIN…PLNI), 291 to 311 (IIPG…CFIW), and 328 to 348 (GWKV…SILV).

Belongs to the complex I subunit 1 family. In terms of assembly, NDH-1 is composed of 14 different subunits. Subunits NuoA, H, J, K, L, M, N constitute the membrane sector of the complex.

Its subcellular location is the cell inner membrane. The catalysed reaction is a quinone + NADH + 5 H(+)(in) = a quinol + NAD(+) + 4 H(+)(out). In terms of biological role, NDH-1 shuttles electrons from NADH, via FMN and iron-sulfur (Fe-S) centers, to quinones in the respiratory chain. The immediate electron acceptor for the enzyme in this species is believed to be ubiquinone. Couples the redox reaction to proton translocation (for every two electrons transferred, four hydrogen ions are translocated across the cytoplasmic membrane), and thus conserves the redox energy in a proton gradient. This subunit may bind ubiquinone. The protein is NADH-quinone oxidoreductase subunit H of Ehrlichia chaffeensis (strain ATCC CRL-10679 / Arkansas).